Consider the following 949-residue polypeptide: MAM domain-containing glycosylphosphatidylinositol anchor protein 2 (949 aa).

A signal peptide spans 1-25 (MDLVYGLVWLLTVLLEGISGQGVYA). 2 consecutive Ig-like domains span residues 27–127 (PTVR…IRVD) and 134–232 (PVVT…KMVS). Cystine bridges form between Cys-62–Cys-110 and Cys-159–Cys-216. Asn-92, Asn-213, and Asn-237 each carry an N-linked (GlcNAc...) asparagine glycan. 4 Ig-like domains span residues 242 to 328 (PSIK…NIIV), 340 to 436 (PDPY…VNIS), 442 to 533 (PNLT…ALVQ), and 540 to 627 (PAVE…FLVT). 2 disulfides stabilise this stretch: Cys-264-Cys-310 and Cys-359-Cys-417. Asn-434, Asn-443, Asn-504, Asn-610, and Asn-703 each carry an N-linked (GlcNAc...) asparagine glycan. 2 disulfide bridges follow: Cys-465/Cys-515 and Cys-561/Cys-611. In terms of domain architecture, Fibronectin type-III spans 638–738 (DTYNPVWQNR…TIRVIKYTGE (101 aa)). The MAM domain maps to 739–914 (FHCGFEDGNI…VSIAEGECAK (176 aa)). Residue Asp-924 is the site of GPI-anchor amidated aspartate attachment. Positions 925–949 (GAVGILVHIWLFPVIILISILSPRR) are cleaved as a propeptide — removed in mature form.

Interacts (through the Ig-like domains) with NLGN2. As to expression, expressed predominantly in neuronal tissue. Expressed in brain.

The protein localises to the cell membrane. In terms of biological role, may be involved in cell-cell interactions. This chain is MAM domain-containing glycosylphosphatidylinositol anchor protein 2 (Mdga2), found in Rattus norvegicus (Rat).